The following is a 574-amino-acid chain: Egalitarian protein homolog (574 aa).

The tract at residues 259-278 is disordered; sequence LNEDGSENGSDEGEETNNNG. Residues 262-273 show a composition bias toward acidic residues; sequence DGSENGSDEGEE. One can recognise a 3'-5' exonuclease domain in the interval 312–414; that stretch reads NMEKKVVGLD…SLLQHEKFNK (103 aa).

As to quaternary structure, component of a dynein-regulating complex composed of at least bicd-1, dlc-1 and egal-1.

The protein localises to the nucleus envelope. In terms of biological role, part of a complex with bicd-1 and dlc-1, which is recruited to the nuclear envelope by unc-83, where in turn, it recruits dynein to the nuclear surface and regulates nuclear migration in hypodermal precursor cells. The sequence is that of Egalitarian protein homolog from Caenorhabditis elegans.